A 292-amino-acid chain; its full sequence is BTB/POZ domain-containing protein KCTD7 (292 aa).

The interval M1 to Y27 is disordered. The region spanning I56–L144 is the BTB domain.

Its subcellular location is the cell membrane. It localises to the cytoplasm. It is found in the cytosol. The sequence is that of BTB/POZ domain-containing protein KCTD7 (kctd7) from Danio rerio (Zebrafish).